A 330-amino-acid polypeptide reads, in one-letter code: MISFSSFYRQIADTQLQHWLESLPAILGEWQRQHKHGNLPKWEKVLAKLHYPAPEFLDLKDSVTIGDGLQLDSGQTEKLENLLKILQPWRKGPFHVHGIHIDTEWRSDWKWDRVSPHLSPLTNRTVLDVGCGSGYHMWRMLGAGAKRVVGIDPSALFLCQFEAIKRLIDTELPVHLLPLGIEELPPLDAFDTVFSMGVLYHRRSPIDHLLQLRDQLRMGGELVLETLVVDGDKDTVLVPQDRYGKMNNVWFLPSIDALKLWLEKCDFTDVRCVNVDVTSLAEQRSTPWMQNESLVDYLDPKDVNLTVEGYPAPKRATFIAVKNRSPQDAD.

Residues lysine 91, tryptophan 105, lysine 110, glycine 130, 152–154, 181–182, methionine 196, tyrosine 200, and arginine 315 each bind carboxy-S-adenosyl-L-methionine; these read DPS and IE.

Belongs to the class I-like SAM-binding methyltransferase superfamily. CmoB family. As to quaternary structure, homotetramer.

It catalyses the reaction carboxy-S-adenosyl-L-methionine + 5-hydroxyuridine(34) in tRNA = 5-carboxymethoxyuridine(34) in tRNA + S-adenosyl-L-homocysteine + H(+). Catalyzes carboxymethyl transfer from carboxy-S-adenosyl-L-methionine (Cx-SAM) to 5-hydroxyuridine (ho5U) to form 5-carboxymethoxyuridine (cmo5U) at position 34 in tRNAs. This is tRNA U34 carboxymethyltransferase from Shewanella amazonensis (strain ATCC BAA-1098 / SB2B).